The sequence spans 1028 residues: Endosome/lysosome-associated apoptosis and autophagy regulator family member 2 (1028 aa).

Positions 1-47 (MLLLTLRRAKGRDRGRPAGGPRRALSLPWSPAWICCWALAGCQAVWA) are cleaved as a signal peptide. Topologically, residues 48–928 (GDSSSSGRPL…TCETVDFWLK (881 aa)) are extracellular. N-linked (GlcNAc...) asparagine glycosylation occurs at asparagine 168. 3 disulfides stabilise this stretch: cysteine 292–cysteine 309, cysteine 322–cysteine 345, and cysteine 325–cysteine 357. N-linked (GlcNAc...) asparagine glycans are attached at residues asparagine 404 and asparagine 690. The MRH domain maps to 671–876 (SDCFFYHEKE…LWESAEACPL (206 aa)). 4 cysteine pairs are disulfide-bonded: cysteine 673/cysteine 719, cysteine 729/cysteine 757, cysteine 826/cysteine 862, and cysteine 838/cysteine 874. Residues 929–949 (VGAGVGAFTAVLLVALTCYFW) traverse the membrane as a helical segment. The Cytoplasmic segment spans residues 950–1028 (KKNQKLEYKY…QLKSSRCPNI (79 aa)). A Phosphoserine modification is found at serine 1017.

Belongs to the ELAPOR family.

The protein localises to the cell membrane. In terms of biological role, functions as a regulator of the BMP signaling pathway and may be involved in epidermal differentiation. This is Endosome/lysosome-associated apoptosis and autophagy regulator family member 2 from Mus musculus (Mouse).